The following is a 299-amino-acid chain: MANFPASLLILNGKSADNQPLREAITLLRDEGIQIHVRVTWEKGDAQRYVDEARRLGVETVIAGGGDGTINEVSTALIQIRDGVAPALGLLPLGTANDFATSAGIPEALDKALKLAIAGNAMEIDMARVNDKTCFINMATGGFGTRITTETPEKLKAALGGVSYLIHGLMRMDTLTPDRCEIRGENFHWQGDTLVIGIGNGRQAGGGQQLCPTALVNDGLLQLRIFTGEELLPALFSTLTQSDDNPNIIDDASAWFDIHAPHEITFNLDGEPLSGQEFHIEVLPGALRCRLPPDCPLLR.

The 132-residue stretch at 2–133 (ANFPASLLIL…IDMARVNDKT (132 aa)) folds into the DAGKc domain. ATP is bound by residues T40, 66 to 72 (GDGTINE), and T95. 3 residues coordinate Mg(2+): L215, D218, and L220. Residue E271 is the Proton acceptor of the active site.

The protein belongs to the diacylglycerol/lipid kinase family. YegS lipid kinase subfamily. Requires Mg(2+) as cofactor. It depends on Ca(2+) as a cofactor.

It is found in the cytoplasm. In terms of biological role, probably phosphorylates lipids; the in vivo substrate is unknown. This chain is Probable lipid kinase YegS, found in Salmonella gallinarum (strain 287/91 / NCTC 13346).